A 640-amino-acid chain; its full sequence is ATP-dependent DNA helicase YoaA (640 aa).

Residues 16–278 enclose the Helicase ATP-binding domain; it reads ELSQNIKGFR…KDMQQLGTTS (263 aa). 51–58 provides a ligand contact to ATP; the sequence is AGTGTGKT. Cys114 provides a ligand contact to [4Fe-4S] cluster. Residues 125 to 128 carry the DEAH box motif; sequence GVLG. The [4Fe-4S] cluster site is built by Cys174, Cys179, and Cys185. A DEAH box motif is present at residues 231 to 234; that stretch reads DEAH. The Helicase C-terminal domain maps to 458–634; that stretch reads SLGEILLPVI…SRTRDLNKVI (177 aa).

The protein belongs to the helicase family. DinG subfamily. [4Fe-4S] cluster is required as a cofactor.

It catalyses the reaction Couples ATP hydrolysis with the unwinding of duplex DNA at the replication fork by translocating in the 5'-3' direction. This creates two antiparallel DNA single strands (ssDNA). The leading ssDNA polymer is the template for DNA polymerase III holoenzyme which synthesizes a continuous strand.. The catalysed reaction is ATP + H2O = ADP + phosphate + H(+). Its function is as follows. Probably a 5'-3' DNA helicase. This is ATP-dependent DNA helicase YoaA from Haemophilus influenzae (strain ATCC 51907 / DSM 11121 / KW20 / Rd).